The sequence spans 208 residues: Small ribosomal subunit protein uS4 (208 aa).

Residues 98-161 form the S4 RNA-binding domain; that stretch reads RRLDNVIYRL…KESPRIKELL (64 aa).

Belongs to the universal ribosomal protein uS4 family. Part of the 30S ribosomal subunit. Contacts protein S5. The interaction surface between S4 and S5 is involved in control of translational fidelity.

In terms of biological role, one of the primary rRNA binding proteins, it binds directly to 16S rRNA where it nucleates assembly of the body of the 30S subunit. With S5 and S12 plays an important role in translational accuracy. The polypeptide is Small ribosomal subunit protein uS4 (Pelotomaculum thermopropionicum (strain DSM 13744 / JCM 10971 / SI)).